The chain runs to 532 residues: NMDA receptor synaptonuclear signaling and neuronal migration factor (532 aa).

The N-myristoyl glycine moiety is linked to residue glycine 2. Positions glycine 2–methionine 235 are necessary and sufficient to elicit dendritic processes and synaptic contacts. 2 disordered regions span residues serine 34–asparagine 67 and arginine 127–lysine 174. The span at proline 38 to leucine 48 shows a compositional bias: basic and acidic residues. Residues arginine 127–glutamine 139 are compositionally biased toward basic residues. Residues proline 155–glutamine 164 show a composition bias toward polar residues. Residue serine 206 is modified to Phosphoserine. A Nuclear localization signal motif is present at residues arginine 247–arginine 252. Residues arginine 275–serine 315 are disordered. Phosphoserine is present on residues serine 292 and serine 294. Residues aspartate 302–serine 311 are compositionally biased toward basic and acidic residues.

It belongs to the NSMF family. In terms of assembly, interacts with KPNA1; the interaction occurs in a calcium-independent manner after synaptic NMDA receptor stimulation and is required for nuclear import of NSMF but is competed by CABP1. Interacts (via the central NLS-containing motif region) with CABP1 (via EF-hands 1 and 2); the interaction occurs in a calcium-dependent manner after synaptic NMDA receptor stimulation and prevents the nuclear import of NSMF. Cannot be competed by calmodulin. In terms of processing, proteolytically processed after NMDA receptor activation. Cleaved in a calcium-dependent and calpain-sensitive manner. Calpain cleavage is essential for the translocation process from dendrites to the nucleus. In terms of tissue distribution, expressed in the radiatum and pyramidale strata of the hippocampus (at protein level). Strongly expressed in the brain. Expressed in the sensory and motor cortex, hippocampus, olfactory bulb, thalamus and amygdala. In the olfactory bulb expressed in the granular cell layer, mitral cell layer and the glomerular layer. In the hippocampus highly expressed in the regions associated with neuronal cell types as CA1, CA2, CA3 and granule cells of the dentate gyrus. All isoforms have been detected in the molecular layers of the hippocampus.

It is found in the nucleus. Its subcellular location is the nucleus envelope. The protein localises to the nucleus membrane. It localises to the nucleus matrix. The protein resides in the cytoplasm. It is found in the cell cortex. Its subcellular location is the cytoskeleton. The protein localises to the cell membrane. It localises to the cell projection. The protein resides in the dendrite. It is found in the synapse. Its subcellular location is the synaptosome. The protein localises to the postsynaptic density. It localises to the membrane. Functionally, couples NMDA-sensitive glutamate receptor signaling to the nucleus and triggers long-lasting changes in the cytoarchitecture of dendrites and spine synapse processes. Part of the cAMP response element-binding protein (CREB) shut-off signaling pathway. Stimulates outgrowth of olfactory axons and migration of gonadotropin-releasing hormone (GnRH) and luteinizing-hormone-releasing hormone (LHRH) neuronal cells. This Rattus norvegicus (Rat) protein is NMDA receptor synaptonuclear signaling and neuronal migration factor (Nsmf).